A 772-amino-acid polypeptide reads, in one-letter code: Annulin (772 aa).

S-palmitoyl cysteine attachment occurs at residues cysteine 4 and cysteine 5. Residues 15–57 (NEGSGGGIPLMPVRGGSTRRPDSLPKPPAAVVPSPPSPGDVPD) form a disordered region. Positions 38–53 (LPKPPAAVVPSPPSPG) are enriched in pro residues. Active-site residues include histidine 400 and aspartate 427. Residues asparagine 467, aspartate 469, glutamate 517, and glutamate 522 each coordinate Ca(2+).

It belongs to the transglutaminase superfamily. Transglutaminase family. Requires Ca(2+) as cofactor. In terms of tissue distribution, has an annular, or ring-like expression pattern in epithelial annuli of developing limb segment boundary cells. In embryos, it is seen in gastrulating cells, in cells surrounding rapidly dividing neuroblasts, and in muscle pioneer cells invaginating to form apodemes.

The protein resides in the cell membrane. The catalysed reaction is L-glutaminyl-[protein] + L-lysyl-[protein] = [protein]-L-lysyl-N(6)-5-L-glutamyl-[protein] + NH4(+). In terms of biological role, participates in morphogenetic activities of the cells, maybe by stabilizing the membrane or subcortical structures of cells that are under mechanical stress. Probably catalyzes the cross-linking of proteins and the conjugation of polyamines to proteins. The sequence is that of Annulin from Schistocerca americana (American grasshopper).